Here is a 276-residue protein sequence, read N- to C-terminus: MNSRRREPITLQDPEAKYPLPLIEKEKISHNTRRFRFGLPSPDHVLGLPVGNYVQLLAKIDNELVVRAYTPVSSDDDRGFVDLIIKIYFKNVHPQYPEGGKMTQYLENMKIGETIFFRGPRGRLFYHGPGNLGIRPDQTSEPKKTLADHLGMIAGGTGITPMLQLIRHITKDPSDRTRMSLIFANQTEEDILVRKELEEIARTHPDQFNLWYTLDRPPIGWKYSSGFVTADMIKEHLPPPAKSTLILVCGPPPLIQTAAHPNLEKLGYTQDMIFTY.

Residues 15–127 form the FAD-binding FR-type domain; it reads EAKYPLPLIE…RGPRGRLFYH (113 aa). Position 17 is an N6-acetyllysine (Lys-17). Tyr-18 carries the post-translational modification Phosphotyrosine. FAD contacts are provided by residues 107–137 and 146–181; these read ENMK…IRPD and LADH…RMSL.

It belongs to the flavoprotein pyridine nucleotide cytochrome reductase family. It depends on FAD as a cofactor. In terms of tissue distribution, restricted expression.

It catalyses the reaction 2 Fe(III)-[cytochrome b5] + NADH = 2 Fe(II)-[cytochrome b5] + NAD(+) + H(+). Functionally, NADH-cytochrome b5 reductases are involved in desaturation and elongation of fatty acids, cholesterol biosynthesis, drug metabolism, and, in erythrocyte, methemoglobin reduction. Responsible for NADH-dependent lucigenin chemiluminescence in spermatozoa by reducing both lucigenin and 2-[4-iodophenyl]-3-[4-nitrophenyl]-5-[2,4-disulfophenyl]-2H tetrazolium monosodium salt (WST-1). The protein is NADH-cytochrome b5 reductase 2 of Homo sapiens (Human).